The chain runs to 327 residues: MAAYDSLMVFTGNANPELAQRVVRHLDISLGNASVSKFSDGEVAVELLENVRGRDVFILQPTCAPTNDNLMEILTMADALKRASAGRITTAIPYFGYARQDRRPRSVRVPISAKLVANMLYSAGIDRVLTVDLHADQIQGFFDIPVDNIYATPILLNDIKQQRIENLTVVSPDIGGVVRARAVAKSLNADLAIIDKRRPKANVAEVMNIIGDIQGRTCLIVDDMIDTANTLCKAAVALKERGAERVLAYASHAVFSGEAVSRIASSEIDQVVVTDTIPLSEAAKNCDRIRQVTIAGLLAETVRRISNEESVSYLFNEEVMTGSMLLP.

ATP is bound by residues 40–42 (DGE) and 99–100 (RQ). Residues His-134 and Asp-173 each coordinate Mg(2+). The active site involves Lys-196. D-ribose 5-phosphate-binding positions include Arg-198, Asp-222, and 226 to 230 (DTANT).

Belongs to the ribose-phosphate pyrophosphokinase family. Class I subfamily. Homohexamer. It depends on Mg(2+) as a cofactor.

It localises to the cytoplasm. It catalyses the reaction D-ribose 5-phosphate + ATP = 5-phospho-alpha-D-ribose 1-diphosphate + AMP + H(+). It participates in metabolic intermediate biosynthesis; 5-phospho-alpha-D-ribose 1-diphosphate biosynthesis; 5-phospho-alpha-D-ribose 1-diphosphate from D-ribose 5-phosphate (route I): step 1/1. Functionally, involved in the biosynthesis of the central metabolite phospho-alpha-D-ribosyl-1-pyrophosphate (PRPP) via the transfer of pyrophosphoryl group from ATP to 1-hydroxyl of ribose-5-phosphate (Rib-5-P). The polypeptide is Ribose-phosphate pyrophosphokinase (Neisseria meningitidis serogroup A / serotype 4A (strain DSM 15465 / Z2491)).